A 337-amino-acid chain; its full sequence is MSLKLGVIGAGAIGKEHIRRCTQVLQGATVVAVSDINADNARAAVALPGVQAEVYADGHDVINASDVDAILVTSWDPTHEEYTLAAIAAGKPVFCEKPLAMTAEGCRRIVDAEMKAGRRLVQVGFMRPYDEGYLALKKVIDDGDIGAPLMLRCAHRNQSVGENYTTDMAITNTLIHELDVLRWLLNDDYRSVQVRFPRSTSHTHARLKDPQIVSFETKKGTLIDVEVFVNCQYGYDIQCEVVGETGIARLPEPSAVQMRKSASLSTAILTDWKDRFIKAYDVELQAFINDVKAGQLHGPSAWDGYAASVAADACIKAQGTSEPVEVTLPECPAFYKR.

Belongs to the Gfo/Idh/MocA family. In terms of assembly, homotetramer.

The catalysed reaction is myo-inositol + NAD(+) = scyllo-inosose + NADH + H(+). Functionally, involved in the oxidation of myo-inositol (MI) to 2-keto-myo-inositol (2KMI or 2-inosose). This is Inositol 2-dehydrogenase from Klebsiella pneumoniae subsp. pneumoniae (strain ATCC 700721 / MGH 78578).